Consider the following 163-residue polypeptide: Cyanate hydratase (163 aa).

Active-site residues include Arg103, Glu106, and Ser129.

It belongs to the cyanase family.

It carries out the reaction cyanate + hydrogencarbonate + 3 H(+) = NH4(+) + 2 CO2. In terms of biological role, catalyzes the reaction of cyanate with bicarbonate to produce ammonia and carbon dioxide. The polypeptide is Cyanate hydratase (Talaromyces stipitatus (strain ATCC 10500 / CBS 375.48 / QM 6759 / NRRL 1006) (Penicillium stipitatum)).